A 470-amino-acid polypeptide reads, in one-letter code: Putative multidrug resistance protein MdtD (470 aa).

Residues 1–11 are Periplasmic-facing; that stretch reads MTELPDNTRWQ. A helical membrane pass occupies residues 12–32; it reads LWIVAFGFFMQSLDTTIVNTA. Topologically, residues 33-48 are cytoplasmic; sequence LPSMAKSLGESPLHMH. Residues 49-69 form a helical membrane-spanning segment; it reads MVVVSYVLTVAVMLPASGWLA. Topologically, residues 70–76 are periplasmic; sequence DKIGVRN. The chain crosses the membrane as a helical span at residues 77–97; sequence IFFAAIVLFTLGSLFCALSGT. Residues 98–101 lie on the Cytoplasmic side of the membrane; the sequence is LNQL. The chain crosses the membrane as a helical span at residues 102 to 124; that stretch reads VLARVLQGVGGAMMVPVGRLTVM. The Periplasmic segment spans residues 125-137; the sequence is KIVPRTQYMAAMT. Residues 138 to 158 form a helical membrane-spanning segment; the sequence is FVTLPGQIGPLLGPALGGVLV. Over 159-164 the chain is Cytoplasmic; it reads EYASWH. The chain crosses the membrane as a helical span at residues 165–185; that stretch reads WIFLINIPVGIVGAMATFMLM. Residues 186 to 196 are Periplasmic-facing; it reads PNYTIETRRFD. Residues 197–217 form a helical membrane-spanning segment; that stretch reads LPGFLLLAIGMAVLTLALDGS. The Cytoplasmic segment spans residues 218-224; it reads KSMGISP. The helical transmembrane segment at 225-245 threads the bilayer; the sequence is WTLAGLAAGGAAAILLYLFHA. Residues 246–262 are Periplasmic-facing; it reads KKNSGALFSLRLFRTPT. A helical membrane pass occupies residues 263–283; sequence FSLGLLGSFAGRIGSGMLPFM. Topologically, residues 284–285 are cytoplasmic; sequence TP. A helical membrane pass occupies residues 286 to 306; the sequence is VFLQIGLGFSPFHAGLMMIPM. The Periplasmic portion of the chain corresponds to 307–341; sequence VLGSMGMKRIVVQIVNRFGYRRVLVATTLGLALVS. Residues 342-362 traverse the membrane as a helical segment; sequence LLFMSVALLGWYYLLPLVLLL. Residues 363–395 lie on the Cytoplasmic side of the membrane; the sequence is QGMVNSARFSSMNTLTLKDLPDTLASSGNSLLS. Residues 396 to 416 traverse the membrane as a helical segment; the sequence is MIMQLSMSIGVTIAGMLLGMF. Topologically, residues 417-430 are periplasmic; that stretch reads GQQHIGIDSSATHH. The chain crosses the membrane as a helical span at residues 431-451; the sequence is VFMYTWLCMAVIIALPAIIFA. Over 452–470 the chain is Cytoplasmic; that stretch reads RVPNDTQQNMVISRRKRSL.

Belongs to the major facilitator superfamily. TCR/Tet family.

The protein localises to the cell inner membrane. The polypeptide is Putative multidrug resistance protein MdtD (Salmonella dublin (strain CT_02021853)).